A 97-amino-acid chain; its full sequence is Mapk-regulated corepressor-interacting protein 1 (97 aa).

A compositionally biased stretch (polar residues) spans 1–26 (MTSSSTPRMHTYKRTSSPRSPTNTGE). Disordered stretches follow at residues 1–27 (MTSS…TGEL) and 54–97 (QNHE…SKKS). Composition is skewed to basic and acidic residues over residues 54–68 (QNHE…EYVE) and 84–97 (SDLK…SKKS). Residues 80 to 84 (PVDLS) carry the PXDLS motif motif.

The protein belongs to the MCRIP family.

It is found in the nucleus. Its subcellular location is the cytoplasm. The protein resides in the stress granule. Functionally, may play a role in the regulation of the epithelial-mesenchymal transition. In Danio rerio (Zebrafish), this protein is Mapk-regulated corepressor-interacting protein 1 (mcrip1).